Reading from the N-terminus, the 347-residue chain is Protein RecA (347 aa).

65–72 (GPESSGKT) serves as a coordination point for ATP. A disordered region spans residues 325–347 (KLGISDGDVEETEDAPKSLFDEE). Residues 338–347 (DAPKSLFDEE) show a composition bias toward basic and acidic residues.

It belongs to the RecA family.

The protein localises to the cytoplasm. Its function is as follows. Can catalyze the hydrolysis of ATP in the presence of single-stranded DNA, the ATP-dependent uptake of single-stranded DNA by duplex DNA, and the ATP-dependent hybridization of homologous single-stranded DNAs. It interacts with LexA causing its activation and leading to its autocatalytic cleavage. This is Protein RecA from Staphylococcus aureus (strain Mu3 / ATCC 700698).